We begin with the raw amino-acid sequence, 231 residues long: Orotidine 5'-phosphate decarboxylase (231 aa).

Substrate is bound by residues Asp11, Lys33, 60–69, Thr120, Arg181, Gln190, Gly210, and Arg211; that span reads DLKFHDIPNT. Lys62 acts as the Proton donor in catalysis.

The protein belongs to the OMP decarboxylase family. Type 1 subfamily. In terms of assembly, homodimer.

It catalyses the reaction orotidine 5'-phosphate + H(+) = UMP + CO2. The protein operates within pyrimidine metabolism; UMP biosynthesis via de novo pathway; UMP from orotate: step 2/2. Functionally, catalyzes the decarboxylation of orotidine 5'-monophosphate (OMP) to uridine 5'-monophosphate (UMP). This is Orotidine 5'-phosphate decarboxylase from Shewanella oneidensis (strain ATCC 700550 / JCM 31522 / CIP 106686 / LMG 19005 / NCIMB 14063 / MR-1).